Reading from the N-terminus, the 255-residue chain is Glutamate racemase (255 aa).

Substrate-binding positions include 7–8 (DS) and 39–40 (YG). Residue Cys70 is the Proton donor/acceptor of the active site. Position 71 to 72 (71 to 72 (NT)) interacts with substrate. The active-site Proton donor/acceptor is Cys181. 182 to 183 (TH) serves as a coordination point for substrate.

It belongs to the aspartate/glutamate racemases family.

It catalyses the reaction L-glutamate = D-glutamate. The protein operates within cell wall biogenesis; peptidoglycan biosynthesis. Provides the (R)-glutamate required for cell wall biosynthesis. The sequence is that of Glutamate racemase from Helicobacter pylori (strain Shi470).